The sequence spans 160 residues: Cytochrome b6-f complex subunit 4 (160 aa).

3 helical membrane-spanning segments follow: residues 36–56 (LLYIFPVVILGTIACNVGLAV), 95–115 (LLGVLLMASVPAGLLTVPFLE), and 131–151 (TVFLVGTVVALWLGIGATLPI).

It belongs to the cytochrome b family. PetD subfamily. As to quaternary structure, the 4 large subunits of the cytochrome b6-f complex are cytochrome b6, subunit IV (17 kDa polypeptide, petD), cytochrome f and the Rieske protein, while the 4 small subunits are petG, petL, petM and petN. The complex functions as a dimer.

It localises to the plastid. It is found in the chloroplast thylakoid membrane. Component of the cytochrome b6-f complex, which mediates electron transfer between photosystem II (PSII) and photosystem I (PSI), cyclic electron flow around PSI, and state transitions. The protein is Cytochrome b6-f complex subunit 4 of Spinacia oleracea (Spinach).